The primary structure comprises 206 residues: Imidazoleglycerol-phosphate dehydratase (206 aa).

It belongs to the imidazoleglycerol-phosphate dehydratase family.

The protein localises to the cytoplasm. It catalyses the reaction D-erythro-1-(imidazol-4-yl)glycerol 3-phosphate = 3-(imidazol-4-yl)-2-oxopropyl phosphate + H2O. Its pathway is amino-acid biosynthesis; L-histidine biosynthesis; L-histidine from 5-phospho-alpha-D-ribose 1-diphosphate: step 6/9. In Mycolicibacterium smegmatis (strain ATCC 700084 / mc(2)155) (Mycobacterium smegmatis), this protein is Imidazoleglycerol-phosphate dehydratase.